The chain runs to 219 residues: uncharacterized protein (219 aa).

The Cytoplasmic portion of the chain corresponds to 1–15; sequence MLKLTTTSVTFHVLR. A helical transmembrane segment spans residues 16-36; the sequence is YFQLGLSVTNLLLASFAIITN. At 37–41 the chain is on the vacuolar side; that stretch reads YKVDR. A helical membrane pass occupies residues 42-62; sequence ILRLSLAVSIISSVYFGIVRF. Position 63 (Leu63) is a topological domain, cytoplasmic. Residues 64-84 traverse the membrane as a helical segment; the sequence is PVLLIFVMEIVQTVLWFTAFV. The Vacuolar portion of the chain corresponds to 85–116; the sequence is TLASKFGSMSCSSMPRGINFDYSGSCKIAKID. A helical membrane pass occupies residues 117–137; that stretch reads ILPEAVLFILFLATTYASYIT. Residues 138 to 219 are Cytoplasmic-facing; sequence VLSQAKENGS…VIDGSIEHSS (82 aa). The tract at residues 176–219 is disordered; it reads PLLDLEVQEDARTETESIEDSTDSEDNANIEQEKVIDGSIEHSS. A compositionally biased stretch (acidic residues) spans 191–203; that stretch reads ESIEDSTDSEDNA. The span at 206–219 shows a compositional bias: basic and acidic residues; that stretch reads EQEKVIDGSIEHSS.

Its subcellular location is the vacuole membrane. This is an uncharacterized protein from Saccharomyces cerevisiae (strain ATCC 204508 / S288c) (Baker's yeast).